We begin with the raw amino-acid sequence, 182 residues long: Ribosome maturation factor RimM (182 aa).

The region spanning 103 to 182 is the PRC barrel domain; it reads EGDYYWKDLM…TIEVDWDPGF (80 aa).

It belongs to the RimM family. In terms of assembly, binds ribosomal protein uS19.

Its subcellular location is the cytoplasm. In terms of biological role, an accessory protein needed during the final step in the assembly of 30S ribosomal subunit, possibly for assembly of the head region. Essential for efficient processing of 16S rRNA. May be needed both before and after RbfA during the maturation of 16S rRNA. It has affinity for free ribosomal 30S subunits but not for 70S ribosomes. The chain is Ribosome maturation factor RimM from Klebsiella pneumoniae subsp. pneumoniae (strain ATCC 700721 / MGH 78578).